The chain runs to 787 residues: Phenylalanine--tRNA ligase beta subunit (787 aa).

Residues 39–149 (APAFAGVVIA…EDAPVGTNIR (111 aa)) enclose the tRNA-binding domain. The 76-residue stretch at 400 to 475 (PEVKQVGLRL…RVYGYENIPD (76 aa)) folds into the B5 domain. Mg(2+) is bound by residues Asp453, Asp459, Glu462, and Glu463. The FDX-ACB domain occupies 694–786 (SKFQPVRRDL…AATAAGARLR (93 aa)).

Belongs to the phenylalanyl-tRNA synthetase beta subunit family. Type 1 subfamily. In terms of assembly, tetramer of two alpha and two beta subunits. The cofactor is Mg(2+).

The protein resides in the cytoplasm. The enzyme catalyses tRNA(Phe) + L-phenylalanine + ATP = L-phenylalanyl-tRNA(Phe) + AMP + diphosphate + H(+). This is Phenylalanine--tRNA ligase beta subunit (pheT) from Neisseria meningitidis serogroup A / serotype 4A (strain DSM 15465 / Z2491).